We begin with the raw amino-acid sequence, 206 residues long: LexA repressor (206 aa).

The H-T-H motif DNA-binding region spans 28 to 48 (VREICNAVGLSSTSTVHGHLS). Active-site for autocatalytic cleavage activity residues include Ser-128 and Lys-166.

The protein belongs to the peptidase S24 family. In terms of assembly, homodimer.

The catalysed reaction is Hydrolysis of Ala-|-Gly bond in repressor LexA.. Its function is as follows. Represses a number of genes involved in the response to DNA damage (SOS response), including recA and lexA. In the presence of single-stranded DNA, RecA interacts with LexA causing an autocatalytic cleavage which disrupts the DNA-binding part of LexA, leading to derepression of the SOS regulon and eventually DNA repair. This Ligilactobacillus salivarius (strain UCC118) (Lactobacillus salivarius) protein is LexA repressor.